A 95-amino-acid chain; its full sequence is Suppressor of silencing 2b (95 aa).

Residues 8–18 form a homotetramerization region; the sequence is LHEIIRKLERM. A coiled-coil region spans residues 8-40; the sequence is LHEIIRKLERMNQKKQAQRKRHKLNRKERGHKS. Positions 16–49 are disordered; the sequence is ERMNQKKQAQRKRHKLNRKERGHKSPSEQRRSEL. The span at 23–37 shows a compositional bias: basic residues; sequence QAQRKRHKLNRKERG. A Nuclear localization signal motif is present at residues 26-30; that stretch reads RKRHK. Over residues 38–49 the composition is skewed to basic and acidic residues; it reads HKSPSEQRRSEL.

It belongs to the cucumovirus/ilarvirus protein 2b family. In terms of assembly, homodimer. Homotetramer (dimer of dimers).

Its subcellular location is the host nucleus. Its function is as follows. Acts as a suppressor of RNA-mediated gene silencing, also known as post-transcriptional gene silencing (PTGS), a mechanism of plant viral defense that limits the accumulation of viral RNAs. Forms a homodimer to measure siRNA duplex in a length-preference mode. Binds to both siRNA duplexes (19bp) and long siRNA duplexes (30bp). In Canna (Florist's daisy), this protein is Suppressor of silencing 2b.